Reading from the N-terminus, the 430-residue chain is Enolase (430 aa).

Glutamine 165 contributes to the (2R)-2-phosphoglycerate binding site. Glutamate 207 acts as the Proton donor in catalysis. 3 residues coordinate Mg(2+): aspartate 244, glutamate 287, and aspartate 314. Residues lysine 339, arginine 368, serine 369, and lysine 390 each coordinate (2R)-2-phosphoglycerate. Residue lysine 339 is the Proton acceptor of the active site.

Belongs to the enolase family. Component of the RNA degradosome, a multiprotein complex involved in RNA processing and mRNA degradation. Mg(2+) is required as a cofactor.

The protein localises to the cytoplasm. Its subcellular location is the secreted. It is found in the cell surface. The enzyme catalyses (2R)-2-phosphoglycerate = phosphoenolpyruvate + H2O. It participates in carbohydrate degradation; glycolysis; pyruvate from D-glyceraldehyde 3-phosphate: step 4/5. Catalyzes the reversible conversion of 2-phosphoglycerate (2-PG) into phosphoenolpyruvate (PEP). It is essential for the degradation of carbohydrates via glycolysis. In Xanthomonas euvesicatoria pv. vesicatoria (strain 85-10) (Xanthomonas campestris pv. vesicatoria), this protein is Enolase.